The following is a 402-amino-acid chain: MMGSWKHCLFSASLISALIFVFVYNTELWENKRFLRAALSNASLLAEACHQIFEGKVFYPTENALKTTLDEATCYEYMVRSHYVTETLSEEEAGFPLAYTVTIHKDFGTFERLFRAIYMPQNVYCVHLDQKATDAFKGAVKQLLSCFPNAFLASKKESVVYGGISRLQADLNCLEDLVASEVPWKYVINTCGQDFPLKTNREIVQYLKGFKGKNITPGVLPPDHAVGRTKYVHQELLNHKNSYVIKTTKLKTPPPHDMVIYFGTAYVALTRDFANFVLQDQLALDLLSWSKDTYSPDEHFWVTLNRIPGVPGSMPNASWTGNLRAIKWSDMEDRHGGCHGHYVHGICIYGNGDLKWLVNSPSLFANKFELNTYPLTVECLELRHRERTLNQSETAIQPSWYF.

Residues 1 to 7 (MMGSWKH) lie on the Cytoplasmic side of the membrane. Residues 8 to 23 (CLFSASLISALIFVFV) traverse the membrane as a helical; Signal-anchor for type II membrane protein segment. Topologically, residues 24-400 (YNTELWENKR…QSETAIQPSW (377 aa)) are lumenal. N-linked (GlcNAc...) asparagine glycosylation is present at Asn-41.

Belongs to the glycosyltransferase 14 family. As to expression, expressed in lens epithelium cells. In terms of tissue distribution, expressed in reticulocytes.

The protein localises to the golgi apparatus membrane. The enzyme catalyses a beta-D-Gal-(1-&gt;4)-beta-D-GlcNAc-(1-&gt;3)-beta-D-Gal-(1-&gt;4)-beta-D-GlcNAc derivative + UDP-N-acetyl-alpha-D-glucosamine = a beta-D-Gal-(1-&gt;4)-beta-D-GlcNAc-(1-&gt;3)-[beta-D-GlcNAc-(1-&gt;6)]-beta-D-Gal-(1-&gt;4)-N-acetyl-beta-D-glucosaminyl derivative + UDP + H(+). It functions in the pathway protein modification; protein glycosylation. Branching enzyme that converts linear into branched poly-N-acetyllactosaminoglycans. Introduces the blood group I antigen during embryonic development. It is closely associated with the development and maturation of erythroid cells. Its function is as follows. Determines the expression of the blood group I antigen in erythrocytes. The protein is N-acetyllactosaminide beta-1,6-N-acetylglucosaminyl-transferase (GCNT2) of Homo sapiens (Human).